The primary structure comprises 415 residues: D-threonate kinase (415 aa).

Substrate is bound by residues D9, R53, and 81-84 (KIDS). Residues S251, 345–348 (GGET), and G392 contribute to the ATP site.

This sequence belongs to the four-carbon acid sugar kinase family.

It catalyses the reaction D-threonate + ATP = 4-O-phospho-D-threonate + ADP + H(+). Functionally, catalyzes the ATP-dependent phosphorylation of D-threonate to D-threonate 4-phosphate. Can also phosphorylate 4-hydroxy-L-threonine, with lower efficiency. This chain is D-threonate kinase, found in Cupriavidus necator (strain ATCC 17699 / DSM 428 / KCTC 22496 / NCIMB 10442 / H16 / Stanier 337) (Ralstonia eutropha).